Here is a 440-residue protein sequence, read N- to C-terminus: Glutamate-1-semialdehyde 2,1-aminomutase (440 aa).

N6-(pyridoxal phosphate)lysine is present on lysine 271.

It belongs to the class-III pyridoxal-phosphate-dependent aminotransferase family. HemL subfamily. In terms of assembly, homodimer. It depends on pyridoxal 5'-phosphate as a cofactor.

It localises to the cytoplasm. It carries out the reaction (S)-4-amino-5-oxopentanoate = 5-aminolevulinate. It participates in porphyrin-containing compound metabolism; protoporphyrin-IX biosynthesis; 5-aminolevulinate from L-glutamyl-tRNA(Glu): step 2/2. The protein is Glutamate-1-semialdehyde 2,1-aminomutase of Chlamydia pneumoniae (Chlamydophila pneumoniae).